The following is a 418-amino-acid chain: Protein SSXT (418 aa).

Ser2 bears the N-acetylserine mark. Residues 2-186 (SVAFAAPRQR…NQMTMSQGQP (185 aa)) form a transcriptional activation region. Residues 50–53 (YQQM) carry the SH2-binding motif. 2 disordered regions span residues 77-118 (APPT…PAPH) and 188-418 (GNYG…NYQQ). Positions 225 to 251 (YQGQQPPMGMMGQVNQGNHMMGQRQIP) are enriched in low complexity. Over residues 309–318 (GYDRPYEDSS) the composition is skewed to basic and acidic residues. 3 stretches are compositionally biased toward low complexity: residues 328–337 (QYGQQQDAYQ), 345–366 (YPPQ…QGYG), and 376–393 (YPNY…YRPT). 2 tandem repeats follow at residues 344–356 (GYPP…PGQQ) and 357–369 (GYPG…GPSQ). The interval 344–369 (GYPPQQQQYPGQQGYPGQQQGYGPSQ) is 2 X 13 AA imperfect tandem repeats. The SH2-binding motif lies at 374–377 (PQYP). The SH3-binding signature appears at 392-401 (PTQPGPPQPP). Residues 394–403 (QPGPPQPPQQ) show a composition bias toward pro residues. The segment covering 404 to 418 (RPYGYDQGQYGNYQQ) has biased composition (low complexity). An SH2-binding motif is present at residues 413-416 (YGNY).

It belongs to the SS18 family. Interacts with MLLT10. Isoform 1 interacts with RBM14 isoform 1. Isoform 2 interacts with RBM14 isoform 1. Component of the multiprotein chromatin-remodeling complexes SWI/SNF: SWI/SNF-A (BAF), SWI/SNF-B (PBAF) and related complexes. The canonical complex contains a catalytic subunit (either SMARCA4/BRG1/BAF190A or SMARCA2/BRM/BAF190B) and at least SMARCE1, ACTL6A/BAF53, SMARCC1/BAF155, SMARCC2/BAF170, and SMARCB1/SNF5/BAF47. Other subunits specific to each of the complexes may also be present permitting several possible combinations developmentally and tissue specific. Component of the SWI/SNF (GBAF) subcomplex, which includes at least BICRA or BICRAL (mutually exclusive), BRD9, SS18, the core BAF subunits, SMARCA2/BRM, SMARCA4/BRG1/BAF190A, ACTL6A/BAF53, SMARCC1/BAF155, and SMARCD1/BAF60A. Fairly ubiquitously expressed. Expressed in synovial sarcomas and in other human cell lines. The fusion genes SSXT-SSX1 and SSXT-SSX2 are expressed only in synovial sarcomas.

The protein localises to the nucleus. In terms of biological role, appears to function synergistically with RBM14 as a transcriptional coactivator. Isoform 1 and isoform 2 function in nuclear receptor coactivation. Isoform 1 and isoform 2 function in general transcriptional coactivation. Component of SWI/SNF chromatin remodeling subcomplex GBAF that carries out key enzymatic activities, changing chromatin structure by altering DNA-histone contacts within a nucleosome in an ATP-dependent manner. The chain is Protein SSXT (SS18) from Homo sapiens (Human).